Here is an 834-residue protein sequence, read N- to C-terminus: MARGERRRRAAAAEGARPLERARGAGRRDGRAGGARGSAGGAALAVVVLALAFGLSGRWVLAWLGVRRALTLHPAPSALPPDSSSPAVAPEFFWGTYRPHVYFGMKTRSPKPLLTGLMWAQQGATPGTPPKLRHTCEQGDGVGPYGWEFHDGLSFGRQHIYDGALRLTTEFVKRSGGHHGGDWSWRVTVEPQASGTPSFPLVSLFFYVVTDGQEVLLPEVGAKGQLKFISGHTSELGDFRLTLLPPTTPGDTVPKHGSYNVFWSSNPGLPLLTDMVKSHLNSWFHHRPPGASPERYLGLPGSLKWEERGPSGQGQFLVQQVTLKAPFSVEFVFESGSARTGRDQASEQLVGGQLTRALESHAAAFKERFERTFQLKEKGLSPEEQALGQVALSGLLGGIGYFYGQGLVLPDTGMEGSEQKMDPSLFPPVPLFSGVPSRSFFPRGFLWDEGFHQLVVQRWDPHLTREALGHWLGLLNADGWIGREQILGDEARARVPPEFLVQRAAHANPPTLLLPVIHMLEGRAPEDLAFLRRAFPRLHAWFSWLHQSQAGPVPLSYRWRGRDLALPTLLNPKTLPSGLDDYPRASHPSAAERHLDLRCWVTLGARVLSQLAEELGETEAAAELGPLAASLEAAGSLDELHWAPELGVFADFGNHTKAVQLKSRPPQGLVRVVGRPPARLQYVDALGYVSLFPLLLQLLEPSSPRLGPLLDVLADSRHLWSPFGLRSLSASSLFYKQRNTEHDPPYWRGAVWLNINYLALGALHHYGRVEGPHKVQAAKLYRELRANVVSNVRQQYQATGFLWEQYSDQDGRGMGCRPFQGWTSLVLLIMAEEY.

Positions 1-10 (MARGERRRRA) are enriched in basic residues. At 1-36 (MARGERRRRAAAAEGARPLERARGAGRRDGRAGGAR) the chain is on the cytoplasmic side. Residues 1–37 (MARGERRRRAAAAEGARPLERARGAGRRDGRAGGARG) are disordered. The Endoplasmic reticulum targeting signature appears at 3 to 9 (RGERRRR). Over residues 17–31 (RPLERARGAGRRDGR) the composition is skewed to basic and acidic residues. A helical; Signal-anchor for type II membrane protein transmembrane segment spans residues 37–57 (GSAGGAALAVVVLALAFGLSG). Topologically, residues 58–834 (RWVLAWLGVR…LVLLIMAEEY (777 aa)) are lumenal. The tract at residues 74–136 (PAPSALPPDS…GTPPKLRHTC (63 aa)) is required for endoplasmic reticulum targeting. Aspartate 580 serves as the catalytic Proton donor. N-linked (GlcNAc...) asparagine glycosylation is present at asparagine 654. Glutamate 804 functions as the Proton acceptor in the catalytic mechanism.

This sequence belongs to the glycosyl hydrolase 63 family.

It localises to the endoplasmic reticulum membrane. It carries out the reaction N(4)-(alpha-D-Glc-(1-&gt;2)-alpha-D-Glc-(1-&gt;3)-alpha-D-Glc-(1-&gt;3)-alpha-D-Man-(1-&gt;2)-alpha-D-Man-(1-&gt;2)-alpha-D-Man-(1-&gt;3)-[alpha-D-Man-(1-&gt;2)-alpha-D-Man-(1-&gt;3)-[alpha-D-Man-(1-&gt;2)-alpha-D-Man-(1-&gt;6)]-alpha-D-Man-(1-&gt;6)]-beta-D-Man-(1-&gt;4)-beta-D-GlcNAc-(1-&gt;4)-beta-D-GlcNAc)-L-asparaginyl-[protein] + H2O = N(4)-(alpha-D-Glc-(1-&gt;3)-alpha-D-Glc-(1-&gt;3)-alpha-D-Man-(1-&gt;2)-alpha-D-Man-(1-&gt;2)-alpha-D-Man-(1-&gt;3)-[alpha-D-Man-(1-&gt;2)-alpha-D-Man-(1-&gt;3)-[alpha-D-Man-(1-&gt;2)-alpha-D-Man-(1-&gt;6)]-alpha-D-Man-(1-&gt;6)]-beta-D-Man-(1-&gt;4)-beta-D-GlcNAc-(1-&gt;4)-beta-D-GlcNAc)-L-asparaginyl-[protein] + beta-D-glucose. It participates in glycan metabolism; N-glycan degradation. In terms of biological role, in the context of N-glycan degradation, cleaves the distal alpha 1,2-linked glucose residue from the Glc(3)Man(9)GlcNAc(2) oligosaccharide precursor in a highly specific manner. This chain is Mannosyl-oligosaccharide glucosidase, found in Rattus norvegicus (Rat).